The chain runs to 506 residues: Cobyric acid synthase (506 aa).

In terms of domain architecture, GATase cobBQ-type spans 251–448 (DITIAIVQLP…LHGLFDSDAF (198 aa)). Residue C332 is the Nucleophile of the active site. H440 is a catalytic residue.

The protein belongs to the CobB/CobQ family. CobQ subfamily. In terms of assembly, homodimer.

The protein operates within cofactor biosynthesis; adenosylcobalamin biosynthesis. Functionally, catalyzes amidations at positions B, D, E, and G on adenosylcobyrinic A,C-diamide. NH(2) groups are provided by glutamine, and one molecule of ATP is hydrogenolyzed for each amidation. The sequence is that of Cobyric acid synthase (cbiP) from Salmonella typhimurium (strain LT2 / SGSC1412 / ATCC 700720).